The chain runs to 660 residues: Probable beta-hexosaminidase fdl (660 aa).

The N-terminal stretch at 1–36 is a signal peptide; sequence MSLAVSLRRALLVLLTGAIFILTVLYWNQGVTKAQA. N-linked (GlcNAc...) asparagine glycans are attached at residues N210, N412, and N452.

This sequence belongs to the glycosyl hydrolase 20 family. In terms of tissue distribution, in third instar larval and early pupal brains, expressed in cells sending projections across the interhemispheric junction. In adult brain, expressed in mushroom body, ellipsoid body and pars intercerebralis.

It carries out the reaction Hydrolysis of terminal non-reducing N-acetyl-D-hexosamine residues in N-acetyl-beta-D-hexosaminides.. Involved in brain restructurization via hormonal control during metamorphosis. Implicated in N-glycan processing. This Drosophila melanogaster (Fruit fly) protein is Probable beta-hexosaminidase fdl (fdl).